A 307-amino-acid chain; its full sequence is tRNA N6-adenosine threonylcarbamoyltransferase (307 aa).

Fe cation-binding residues include His108 and His112. Substrate is bound by residues Ile131–Gly135, Asp164, Gly177, Asp181, and Asn266. Asp290 contributes to the Fe cation binding site.

This sequence belongs to the KAE1 / TsaD family. Fe(2+) serves as cofactor.

It localises to the cytoplasm. The catalysed reaction is L-threonylcarbamoyladenylate + adenosine(37) in tRNA = N(6)-L-threonylcarbamoyladenosine(37) in tRNA + AMP + H(+). In terms of biological role, required for the formation of a threonylcarbamoyl group on adenosine at position 37 (t(6)A37) in tRNAs that read codons beginning with adenine. Is involved in the transfer of the threonylcarbamoyl moiety of threonylcarbamoyl-AMP (TC-AMP) to the N6 group of A37, together with TsaE and TsaB. TsaD likely plays a direct catalytic role in this reaction. The sequence is that of tRNA N6-adenosine threonylcarbamoyltransferase from Mycoplasmopsis synoviae (strain 53) (Mycoplasma synoviae).